The following is a 272-amino-acid chain: 4-hydroxy-tetrahydrodipicolinate reductase (272 aa).

NAD(+)-binding positions include 12-17 (GAAGRM) and Glu38. NADP(+) is bound at residue Arg39. NAD(+) is bound by residues 102–104 (GTT) and 126–129 (SGNM). Residue His160 is the Proton donor/acceptor of the active site. His161 is a binding site for (S)-2,3,4,5-tetrahydrodipicolinate. Lys164 serves as the catalytic Proton donor. 170-171 (GT) provides a ligand contact to (S)-2,3,4,5-tetrahydrodipicolinate.

The protein belongs to the DapB family.

It localises to the cytoplasm. It catalyses the reaction (S)-2,3,4,5-tetrahydrodipicolinate + NAD(+) + H2O = (2S,4S)-4-hydroxy-2,3,4,5-tetrahydrodipicolinate + NADH + H(+). The enzyme catalyses (S)-2,3,4,5-tetrahydrodipicolinate + NADP(+) + H2O = (2S,4S)-4-hydroxy-2,3,4,5-tetrahydrodipicolinate + NADPH + H(+). Its pathway is amino-acid biosynthesis; L-lysine biosynthesis via DAP pathway; (S)-tetrahydrodipicolinate from L-aspartate: step 4/4. Functionally, catalyzes the conversion of 4-hydroxy-tetrahydrodipicolinate (HTPA) to tetrahydrodipicolinate. The sequence is that of 4-hydroxy-tetrahydrodipicolinate reductase from Sinorhizobium fredii (strain NBRC 101917 / NGR234).